Reading from the N-terminus, the 450-residue chain is Phosphomethylpyrimidine synthase (450 aa).

Residues asparagine 80, methionine 109, tyrosine 138, histidine 173, 193 to 195, 234 to 237, and glutamate 273 each bind substrate; these read SRG and DSLR. A Zn(2+)-binding site is contributed by histidine 277. Position 300 (tyrosine 300) interacts with substrate. Residue histidine 341 coordinates Zn(2+). Residues cysteine 421, cysteine 424, and cysteine 429 each contribute to the [4Fe-4S] cluster site.

It belongs to the ThiC family. Homodimer. Requires [4Fe-4S] cluster as cofactor.

It catalyses the reaction 5-amino-1-(5-phospho-beta-D-ribosyl)imidazole + S-adenosyl-L-methionine = 4-amino-2-methyl-5-(phosphooxymethyl)pyrimidine + CO + 5'-deoxyadenosine + formate + L-methionine + 3 H(+). It participates in cofactor biosynthesis; thiamine diphosphate biosynthesis. Functionally, catalyzes the synthesis of the hydroxymethylpyrimidine phosphate (HMP-P) moiety of thiamine from aminoimidazole ribotide (AIR) in a radical S-adenosyl-L-methionine (SAM)-dependent reaction. This is Phosphomethylpyrimidine synthase from Campylobacter fetus subsp. fetus (strain 82-40).